The chain runs to 164 residues: Phosphopantetheine adenylyltransferase (164 aa).

Residue serine 9 coordinates substrate. ATP contacts are provided by residues serine 9–phenylalanine 10 and histidine 17. 3 residues coordinate substrate: lysine 41, valine 78, and arginine 92. Residues glycine 93–arginine 95, glutamate 103, and valine 128–threonine 134 each bind ATP.

Belongs to the bacterial CoaD family. In terms of assembly, homohexamer. Mg(2+) serves as cofactor.

It is found in the cytoplasm. It catalyses the reaction (R)-4'-phosphopantetheine + ATP + H(+) = 3'-dephospho-CoA + diphosphate. The protein operates within cofactor biosynthesis; coenzyme A biosynthesis; CoA from (R)-pantothenate: step 4/5. Functionally, reversibly transfers an adenylyl group from ATP to 4'-phosphopantetheine, yielding dephospho-CoA (dPCoA) and pyrophosphate. This chain is Phosphopantetheine adenylyltransferase, found in Brucella suis (strain ATCC 23445 / NCTC 10510).